Reading from the N-terminus, the 334-residue chain is MPKMYYEKDTDLNLLRGKKVAIIGYGSQGHAHALNLHESGVDVVVGLYNGSKSWAKAEAAGLQVATVADAAKAADLIMILLPDEKQAKIYNEEIAPNLEEGNALVFAHGFNIHFGQVVPPSYVDVFMVAPKGPGHLVRRTYTEGAGVPCLIAVHQDATGKAKQYALAYANGIGGARAGVLETTFKDETETDLFGEQAVLCGGVSELIKAGFETLVEAGYAPENAYFECMHEMKLIVDLLYQGGLSMMRYSISDTAEYGDYQIGRRIITDETKKEMKKVLTEIQDGTFAKNWLLENQTNRPGFNARRRMEAEHPIEKVGKELRGMMSWIDTAKVD.

In terms of domain architecture, KARI N-terminal Rossmann spans 2–182 (PKMYYEKDTD…GGARAGVLET (181 aa)). NADP(+)-binding positions include 25–28 (YGSQ), S51, S53, and 83–86 (DEKQ). Residue H108 is part of the active site. G134 lines the NADP(+) pocket. The KARI C-terminal knotted domain maps to 183–328 (TFKDETETDL…KELRGMMSWI (146 aa)). Residues D191, E195, E227, and E231 each coordinate Mg(2+). Residue S252 coordinates substrate.

The protein belongs to the ketol-acid reductoisomerase family. Mg(2+) is required as a cofactor.

It catalyses the reaction (2R)-2,3-dihydroxy-3-methylbutanoate + NADP(+) = (2S)-2-acetolactate + NADPH + H(+). It carries out the reaction (2R,3R)-2,3-dihydroxy-3-methylpentanoate + NADP(+) = (S)-2-ethyl-2-hydroxy-3-oxobutanoate + NADPH + H(+). The protein operates within amino-acid biosynthesis; L-isoleucine biosynthesis; L-isoleucine from 2-oxobutanoate: step 2/4. It functions in the pathway amino-acid biosynthesis; L-valine biosynthesis; L-valine from pyruvate: step 2/4. Involved in the biosynthesis of branched-chain amino acids (BCAA). Catalyzes an alkyl-migration followed by a ketol-acid reduction of (S)-2-acetolactate (S2AL) to yield (R)-2,3-dihydroxy-isovalerate. In the isomerase reaction, S2AL is rearranged via a Mg-dependent methyl migration to produce 3-hydroxy-3-methyl-2-ketobutyrate (HMKB). In the reductase reaction, this 2-ketoacid undergoes a metal-dependent reduction by NADPH to yield (R)-2,3-dihydroxy-isovalerate. This chain is Ketol-acid reductoisomerase (NADP(+)), found in Clostridium beijerinckii (strain ATCC 51743 / NCIMB 8052) (Clostridium acetobutylicum).